Consider the following 302-residue polypeptide: Putative peptide permease protein BRA0407/BS1330_II0404 (302 aa).

The segment at 1 to 22 (MRSSIHASRLRKMGQSIPASTG) is disordered. A run of 6 helical transmembrane segments spans residues 38-58 (IFGL…PLWL), 101-121 (LLVA…IGAI), 147-167 (IFLL…VVVI), 200-222 (AGLG…VVYA), 230-250 (ILLE…AASW), and 268-288 (WQWL…NFIG). In terms of domain architecture, ABC transmembrane type-1 spans 97-288 (GRISLLVAVS…LAVLAINFIG (192 aa)).

Belongs to the binding-protein-dependent transport system permease family. In terms of assembly, the complex is composed of two ATP-binding proteins (BRA0404 and BRA0405), two transmembrane proteins (BRA0407 and BRA0408) and a solute-binding protein (BRA0409).

The protein localises to the cell inner membrane. In terms of biological role, probably part of an ABC transporter complex that could be involved in peptide import. Probably responsible for the translocation of the substrate across the membrane. This chain is Putative peptide permease protein BRA0407/BS1330_II0404, found in Brucella suis biovar 1 (strain 1330).